We begin with the raw amino-acid sequence, 1202 residues long: GACCDGDGRTTRAGGCGRDECDTYVRVCLKEYQAKVTPTGPCSYGYGATPVLGSNSFYLPPAGAAGDRARARSRTGGHQDPGLVVIPFQFAWPRSFTLIVEAWDWDNDTTPDEELLIERVSHAGMINPEDRWKSLHFSGHVAHLELQIRVRCDENYYSATCNKFCRPRNDFFGHYTCDQYGNKACMDGWMGKECKEAVCKQGCNLLHGGCTVPGECRCSYGWQGKFCDECVPYPGCVHGSCVEPWHCDCETNWGGLLCDKDLNYCGSHHPCVNGGTCINAEPDQYLCACPDGYLGKNCERAEHACASNPCANGGSCHEVLSGFECHCPSGWSGPTCALDIDECASNPCAAGGTCVDQVDGFECICPEQWVGATCQLDANECEGKPCLNAFSCKNLIGGYYCDCLPGWKGANCHININDCHGQCQHGGTCKDLVNGYQCVCPRGFGGRHCELEYYKCASSPCRRGGICEDLVDGFRCHCPRGLSGPLCEVDVDLWCEPNPCLNGARCYNLEDDYYCACPEDFGGKNCSVPRETCPGGACRVIDGCGFEAGSRAHGAAPSGVCGPHGHCVSLPGGNFSCICDSGFTGTYCHENIDDCMGQPCRNGGTCIDEVDSFACFCPSGWEGELCDINPNDCLPDPCHSRGRCYDLVNDFYCVCDDGWKDKTCHSREFQCDAYTCSNGGTCYDSGDTFRCACPPGWKGSTCTIAKNSSCVPNPCVNGGTCVGSGDSFSCICRDGWEGRTCTHNTNDCNPLPCYNGGICVDGVNWFRCECAPGFAGPDCRINIDECQSSPCAYGATCVDEINGYRCSCPPGRSGPRCQEVVIFTRPCWSRGVSFPHGSSWVEDCNSCRCLDGHRDCSKVWCGWKPCLLSPQPSALSAQCPPGQQCREKAMGQCLQPPCENWGECTAEDPLPPSTPCLPRTTHLDNNCARLTLHFNRDQVPQGTTVGAICSGIRALPATRAAARDRLLLLLCDRASSGASAVEVAVSFSPARDLPDSSLIQSTAHAIVAAITQRGNSSLLLAVTEVKVETVVMGGSSTGLLVPVLCSVFSVLWLACMVICVWWTRKRRKERERSRLPRDESANNQWAPLNPIRNPIERPGSSGLGTGGHKDVLYQCKNFTPPPRRAGEALPGPASHGAGGEDEEDEELSRGDGRLSRSREVPLTQIHQRPQLLPGKASLLAPGPKVDNRAVRSTKDVRCAGRE.

Residues 1-1037 (GACCDGDGRT…ETVVMGGSST (1037 aa)) are Extracellular-facing. The N-linked (GlcNAc...) asparagine glycan is linked to Asn-107. Positions 150-194 (VRCDENYYSATCNKFCRPRNDFFGHYTCDQYGNKACMDGWMGKEC) constitute a DSL domain. 42 disulfides stabilise this stretch: Cys-152–Cys-161, Cys-165–Cys-177, Cys-185–Cys-194, Cys-199–Cys-210, Cys-203–Cys-216, Cys-218–Cys-227, Cys-230–Cys-241, Cys-236–Cys-247, Cys-249–Cys-258, Cys-265–Cys-277, Cys-271–Cys-287, Cys-289–Cys-298, Cys-305–Cys-316, Cys-310–Cys-325, Cys-327–Cys-336, Cys-343–Cys-354, Cys-348–Cys-363, Cys-365–Cys-374, Cys-381–Cys-392, Cys-386–Cys-401, Cys-403–Cys-412, Cys-419–Cys-429, Cys-423–Cys-438, Cys-440–Cys-449, Cys-456–Cys-467, Cys-461–Cys-476, Cys-478–Cys-487, Cys-495–Cys-506, Cys-500–Cys-515, Cys-517–Cys-526, Cys-544–Cys-567, Cys-561–Cys-577, Cys-579–Cys-588, Cys-595–Cys-606, Cys-600–Cys-615, Cys-617–Cys-626, Cys-633–Cys-644, Cys-638–Cys-653, Cys-655–Cys-664, Cys-671–Cys-682, Cys-676–Cys-691, and Cys-693–Cys-702. An EGF-like 1 domain is found at 195–228 (KEAVCKQGCNLLHGGCTVPGECRCSYGWQGKFCD). Residues 229–259 (ECVPYPGCVHGSCVEPWHCDCETNWGGLLCD) form the EGF-like 2; atypical domain. 2 EGF-like domains span residues 261–299 (DLNY…KNCE) and 301–337 (AEHA…PTCA). One can recognise an EGF-like 5; calcium-binding domain in the interval 339–375 (DIDECASNPCAAGGTCVDQVDGFECICPEQWVGATCQ). The region spanning 377–413 (DANECEGKPCLNAFSCKNLIGGYYCDCLPGWKGANCH) is the EGF-like 6; calcium-binding domain. The 36-residue stretch at 415 to 450 (NINDCHGQCQHGGTCKDLVNGYQCVCPRGFGGRHCE) folds into the EGF-like 7; calcium-binding domain. 2 EGF-like domains span residues 452–488 (EYYK…PLCE) and 490–527 (DVDL…KNCS). The N-linked (GlcNAc...) asparagine glycan is linked to Asn-525. One can recognise an EGF-like 10; atypical domain in the interval 529 to 589 (PRETCPGGAC…DSGFTGTYCH (61 aa)). A glycan (N-linked (GlcNAc...) asparagine) is linked at Asn-574. Residues 591–627 (NIDDCMGQPCRNGGTCIDEVDSFACFCPSGWEGELCD) form the EGF-like 11; calcium-binding domain. In terms of domain architecture, EGF-like 12; calcium-binding spans 629–665 (NPNDCLPDPCHSRGRCYDLVNDFYCVCDDGWKDKTCH). EGF-like domains are found at residues 667–703 (REFQ…STCT) and 706–742 (KNSS…RTCT). N-linked (GlcNAc...) asparagine glycosylation is present at Asn-707. Disulfide bonds link Cys-710-Cys-721, Cys-715-Cys-730, Cys-732-Cys-741, Cys-748-Cys-759, Cys-753-Cys-768, Cys-770-Cys-779, Cys-786-Cys-797, Cys-791-Cys-806, and Cys-808-Cys-817. Residues 744 to 780 (NTNDCNPLPCYNGGICVDGVNWFRCECAPGFAGPDCR) enclose the EGF-like 15; calcium-binding domain. The EGF-like 16; calcium-binding domain maps to 782-818 (NIDECQSSPCAYGATCVDEINGYRCSCPPGRSGPRCQ). The N-linked (GlcNAc...) asparagine glycan is linked to Asn-1015. Residues 1038 to 1058 (GLLVPVLCSVFSVLWLACMVI) traverse the membrane as a helical segment. Residues 1059 to 1202 (CVWWTRKRRK…TKDVRCAGRE (144 aa)) lie on the Cytoplasmic side of the membrane. Basic and acidic residues-rich tracts occupy residues 1070–1080 (RERSRLPRDES), 1147–1159 (LSRG…RSRE), and 1185–1202 (VDNR…AGRE). Residues 1070-1202 (RERSRLPRDE…TKDVRCAGRE (133 aa)) form a disordered region. Ser-1080 is modified (phosphoserine).

It localises to the membrane. Putative Notch ligand involved in the mediation of Notch signaling. May have a role in neurogenesis in the peripheral nervous system, limb development and in the adult brain. The polypeptide is Protein jagged-2 (Jag2) (Rattus norvegicus (Rat)).